The chain runs to 485 residues: NADH-quinone oxidoreductase subunit N (485 aa).

14 helical membrane passes run 8–28 (LIAL…MLSI), 35–55 (FLNA…LWFV), 75–95 (LYTG…YPWL), 105–125 (FYLL…ANHL), 127–147 (ALFL…GYAF), 159–179 (YTIL…LVYA), 203–223 (LLAG…LVPF), 235–255 (PAPV…GVVM), 271–291 (VVLG…ALSQ), 297–317 (LLGY…IALQ), 326–346 (VGVY…VVSL), 374–394 (AVMT…GFIG), 408–430 (WWLV…RVAV), and 455–475 (IVVL…QPLI).

It belongs to the complex I subunit 2 family. NDH-1 is composed of 13 different subunits. Subunits NuoA, H, J, K, L, M, N constitute the membrane sector of the complex.

The protein localises to the cell inner membrane. The enzyme catalyses a quinone + NADH + 5 H(+)(in) = a quinol + NAD(+) + 4 H(+)(out). Its function is as follows. NDH-1 shuttles electrons from NADH, via FMN and iron-sulfur (Fe-S) centers, to quinones in the respiratory chain. The immediate electron acceptor for the enzyme in this species is believed to be ubiquinone. Couples the redox reaction to proton translocation (for every two electrons transferred, four hydrogen ions are translocated across the cytoplasmic membrane), and thus conserves the redox energy in a proton gradient. The chain is NADH-quinone oxidoreductase subunit N from Klebsiella pneumoniae subsp. pneumoniae (strain ATCC 700721 / MGH 78578).